The following is a 268-amino-acid chain: HLA class II histocompatibility antigen, DQ beta 2 chain (268 aa).

A signal peptide spans 1–32 (MSWKMALQIPGGFWAAAVTVMLVMLSTPVAEA). Residues 33–126 (RDFPKDFLVQ…ELRTTLQRQV (94 aa)) are beta-1. At 33–229 (RDFPKDFLVQ…RAQSESAQSK (197 aa)) the chain is on the extracellular side. Intrachain disulfides connect cysteine 47/cysteine 110 and cysteine 148/cysteine 204. Asparagine 51 carries N-linked (GlcNAc...) asparagine glycosylation. A beta-2 region spans residues 127 to 229 (EPTVTISPSR…RAQSESAQSK (103 aa)). An Ig-like C1-type domain is found at 128 to 216 (PTVTISPSRT…EHPSLQSPIT (89 aa)). Residues 230-250 (MLSGIGGFVLGLIFLGLGLII) traverse the membrane as a helical segment. Residues 251 to 268 (RHRGQKGPRGPPPAGLLH) lie on the Cytoplasmic side of the membrane.

This sequence belongs to the MHC class II family. Heterodimer of an alpha and a beta subunit; also referred as MHC class II molecule. Dimer formation with HLA-DQA2, but not with HLA-DQA1, is required for efficient exit from the endoplasmic reticulum (ER). In the ER, forms a heterononamer; 3 MHC class II molecules bind to a CD74 homotrimer (also known as invariant chain or HLA class II histocompatibility antigen gamma chain). In the endosomal/lysosomal system; CD74 undergoes sequential degradation by various proteases; leaving a small fragment termed CLIP on each MHC class II molecule. MHC class II molecule interacts with HLA_DM, and HLA_DO in B-cells, in order to release CLIP and facilitate the binding of antigenic peptides. Association with HLA-DMA also occurs in skin Langerhans cells, in post-Golgi compartments. As to expression, restricted to skin Langerhans cells (at protein level).

It is found in the cell membrane. The protein resides in the endoplasmic reticulum membrane. The protein localises to the golgi apparatus. Its subcellular location is the trans-Golgi network membrane. It localises to the endosome membrane. It is found in the lysosome membrane. In terms of biological role, binds peptides derived from antigens that access the endocytic route of antigen presenting cells (APC) and presents them on the cell surface for recognition by the CD4 T-cells. The peptide binding cleft accommodates peptides of 10-30 residues. The peptides presented by MHC class II molecules are generated mostly by degradation of proteins that access the endocytic route, where they are processed by lysosomal proteases and other hydrolases. Exogenous antigens that have been endocytosed by the APC are thus readily available for presentation via MHC II molecules, and for this reason this antigen presentation pathway is usually referred to as exogenous. As membrane proteins on their way to degradation in lysosomes as part of their normal turn-over are also contained in the endosomal/lysosomal compartments, exogenous antigens must compete with those derived from endogenous components. Autophagy is also a source of endogenous peptides, autophagosomes constitutively fuse with MHC class II loading compartments. In addition to APCs, other cells of the gastrointestinal tract, such as epithelial cells, express MHC class II molecules and CD74 and act as APCs, which is an unusual trait of the GI tract. To produce a MHC class II molecule that presents an antigen, three MHC class II molecules (heterodimers of an alpha and a beta chain) associate with a CD74 trimer in the ER to form a heterononamer. Soon after the entry of this complex into the endosomal/lysosomal system where antigen processing occurs, CD74 undergoes a sequential degradation by various proteases, including CTSS and CTSL, leaving a small fragment termed CLIP (class-II-associated invariant chain peptide). The removal of CLIP is facilitated by HLA-DM via direct binding to the alpha-beta-CLIP complex so that CLIP is released. HLA-DM stabilizes MHC class II molecules until primary high affinity antigenic peptides are bound. The MHC II molecule bound to a peptide is then transported to the cell membrane surface. In B-cells, the interaction between HLA-DM and MHC class II molecules is regulated by HLA-DO. Primary dendritic cells (DCs) also to express HLA-DO. Lysosomal microenvironment has been implicated in the regulation of antigen loading into MHC II molecules, increased acidification produces increased proteolysis and efficient peptide loading. This Homo sapiens (Human) protein is HLA class II histocompatibility antigen, DQ beta 2 chain (HLA-DQB2).